We begin with the raw amino-acid sequence, 261 residues long: Ribosomal RNA small subunit methyltransferase A (261 aa).

The S-adenosyl-L-methionine site is built by histidine 13, leucine 15, glycine 40, glutamate 61, aspartate 85, and asparagine 105.

This sequence belongs to the class I-like SAM-binding methyltransferase superfamily. rRNA adenine N(6)-methyltransferase family. RsmA subfamily.

It localises to the cytoplasm. It carries out the reaction adenosine(1518)/adenosine(1519) in 16S rRNA + 4 S-adenosyl-L-methionine = N(6)-dimethyladenosine(1518)/N(6)-dimethyladenosine(1519) in 16S rRNA + 4 S-adenosyl-L-homocysteine + 4 H(+). Functionally, specifically dimethylates two adjacent adenosines (A1518 and A1519) in the loop of a conserved hairpin near the 3'-end of 16S rRNA in the 30S particle. May play a critical role in biogenesis of 30S subunits. The polypeptide is Ribosomal RNA small subunit methyltransferase A (Flavobacterium johnsoniae (strain ATCC 17061 / DSM 2064 / JCM 8514 / BCRC 14874 / CCUG 350202 / NBRC 14942 / NCIMB 11054 / UW101) (Cytophaga johnsonae)).